Reading from the N-terminus, the 188-residue chain is Large ribosomal subunit protein uL6 (188 aa).

Belongs to the universal ribosomal protein uL6 family.

The sequence is that of Large ribosomal subunit protein uL6 (RPL9) from Tetrahymena thermophila (strain SB210).